A 430-amino-acid chain; its full sequence is Adenylosuccinate synthetase (430 aa).

GTP contacts are provided by residues 12 to 18 (GDEGKGK) and 40 to 42 (GHT). Catalysis depends on Asp13, which acts as the Proton acceptor. Asp13 and Gly40 together coordinate Mg(2+). IMP-binding positions include 13 to 16 (DEGK), 38 to 41 (NAGH), Thr128, Arg142, Gln223, Thr238, and Arg302. His41 serves as the catalytic Proton donor. 298–304 (TTTGRPR) provides a ligand contact to substrate. Residues Arg304, 330 to 332 (LLD), and 412 to 414 (SVG) each bind GTP.

It belongs to the adenylosuccinate synthetase family. In terms of assembly, homodimer. Mg(2+) is required as a cofactor.

The protein resides in the cytoplasm. The catalysed reaction is IMP + L-aspartate + GTP = N(6)-(1,2-dicarboxyethyl)-AMP + GDP + phosphate + 2 H(+). Its pathway is purine metabolism; AMP biosynthesis via de novo pathway; AMP from IMP: step 1/2. Its function is as follows. Plays an important role in the de novo pathway of purine nucleotide biosynthesis. Catalyzes the first committed step in the biosynthesis of AMP from IMP. The polypeptide is Adenylosuccinate synthetase (Listeria monocytogenes serotype 4b (strain CLIP80459)).